Here is a 451-residue protein sequence, read N- to C-terminus: Chromosomal replication initiator protein DnaA (451 aa).

Residues 1–72 (MQSIEDIWQE…ANILQEITGR (72 aa)) are domain I, interacts with DnaA modulators. Residues 72–108 (RLFDVRFIDGEQEENFEYTVIKPNPALDEDGIEIGKH) are domain II. The interval 109 to 325 (MLNPRYVFDT…GALIRVVAYS (217 aa)) is domain III, AAA+ region. Positions 153, 155, 156, and 157 each coordinate ATP. Residues 326–451 (SLVNKDITAG…KNLRKAQNMF (126 aa)) form a domain IV, binds dsDNA region.

It belongs to the DnaA family. In terms of assembly, oligomerizes as a right-handed, spiral filament on DNA at oriC.

It is found in the cytoplasm. Functionally, plays an essential role in the initiation and regulation of chromosomal replication. ATP-DnaA binds to the origin of replication (oriC) to initiate formation of the DNA replication initiation complex once per cell cycle. Binds the DnaA box (a 9 base pair repeat at the origin) and separates the double-stranded (ds)DNA. Forms a right-handed helical filament on oriC DNA; dsDNA binds to the exterior of the filament while single-stranded (ss)DNA is stabiized in the filament's interior. The ATP-DnaA-oriC complex binds and stabilizes one strand of the AT-rich DNA unwinding element (DUE), permitting loading of DNA polymerase. After initiation quickly degrades to an ADP-DnaA complex that is not apt for DNA replication. Binds acidic phospholipids. The sequence is that of Chromosomal replication initiator protein DnaA from Listeria monocytogenes serotype 4b (strain F2365).